The sequence spans 141 residues: Hemoglobin subunit alpha-D (141 aa).

Residues 1 to 141 (MLSADDKKII…VAAVLAEKYR (141 aa)) form the Globin domain. Residues H58 and H87 each contribute to the heme b site.

This sequence belongs to the globin family. As to quaternary structure, heterotetramer of two alpha-D chains and two beta chains. Red blood cells.

Functionally, involved in oxygen transport from the lung to the various peripheral tissues. In Anser indicus (Bar-headed goose), this protein is Hemoglobin subunit alpha-D (HBAD).